Consider the following 418-residue polypeptide: Tyrosine--tRNA ligase (418 aa).

An L-tyrosine-binding site is contributed by tyrosine 34. Residues 39-48 (PTADSLHLGH) carry the 'HIGH' region motif. L-tyrosine contacts are provided by tyrosine 169 and glutamine 173. Positions 229 to 233 (KFGKS) match the 'KMSKS' region motif. An ATP-binding site is contributed by lysine 232. In terms of domain architecture, S4 RNA-binding spans 352–418 (LNIVDLLVTA…GKKKYFVLTY (67 aa)).

Belongs to the class-I aminoacyl-tRNA synthetase family. TyrS type 1 subfamily. As to quaternary structure, homodimer.

The protein localises to the cytoplasm. It carries out the reaction tRNA(Tyr) + L-tyrosine + ATP = L-tyrosyl-tRNA(Tyr) + AMP + diphosphate + H(+). Catalyzes the attachment of tyrosine to tRNA(Tyr) in a two-step reaction: tyrosine is first activated by ATP to form Tyr-AMP and then transferred to the acceptor end of tRNA(Tyr). The polypeptide is Tyrosine--tRNA ligase (Streptococcus gordonii (strain Challis / ATCC 35105 / BCRC 15272 / CH1 / DL1 / V288)).